The chain runs to 197 residues: Peptidyl-tRNA hydrolase (197 aa).

Tyrosine 18 contacts tRNA. The active-site Proton acceptor is the histidine 23. 3 residues coordinate tRNA: phenylalanine 69, asparagine 71, and asparagine 117.

The protein belongs to the PTH family. Monomer.

The protein localises to the cytoplasm. It catalyses the reaction an N-acyl-L-alpha-aminoacyl-tRNA + H2O = an N-acyl-L-amino acid + a tRNA + H(+). Hydrolyzes ribosome-free peptidyl-tRNAs (with 1 or more amino acids incorporated), which drop off the ribosome during protein synthesis, or as a result of ribosome stalling. Its function is as follows. Catalyzes the release of premature peptidyl moieties from peptidyl-tRNA molecules trapped in stalled 50S ribosomal subunits, and thus maintains levels of free tRNAs and 50S ribosomes. This Psychromonas ingrahamii (strain DSM 17664 / CCUG 51855 / 37) protein is Peptidyl-tRNA hydrolase.